Here is a 1055-residue protein sequence, read N- to C-terminus: RapA guanosine triphosphatase-activating protein 1 (1055 aa).

Disordered regions lie at residues 76 to 100, 256 to 292, 418 to 525, 544 to 570, 603 to 629, and 943 to 969; these read LSPQ…EEER, NHQP…SSLT, QQLL…FLGV, THAT…SPPL, TTQL…PPSE, and NNNS…NLPT. Residues 89 to 100 are compositionally biased toward basic and acidic residues; that stretch reads QHEKITPEEEER. Composition is skewed to low complexity over residues 262–292, 442–455, and 469–482; these read STPR…SSLT, DFNL…NNNN, and TTTT…NNNN. Residues 483-494 show a composition bias toward polar residues; it reads ISPQHSGTSGSP. Composition is skewed to low complexity over residues 603–622 and 943–966; these read TTQL…TSQP and NNNS…SDSN. Positions 779-1048 constitute a Rap-GAP domain; the sequence is LIQFEAKNIH…RTRKEFLHSF (270 aa).

The protein resides in the cytoplasm. It is found in the cell cortex. Its function is as follows. Mediates the deactivation of rap1 and plays an important role in spatially and temporally regulating cell adhesion and chemotaxis by controlling attachment disassembly in the leading edge through the regulation of myosin II assembly and disassembly. Overexpression leads to defective chemotaxis. The sequence is that of RapA guanosine triphosphatase-activating protein 1 (rapgap1) from Dictyostelium discoideum (Social amoeba).